A 31-amino-acid polypeptide reads, in one-letter code: Cyclotide vibi-G (31 aa).

A cross-link (cyclopeptide (Gly-Asn)) is located at residues 1 to 31 (GTFPCGESCVFIPCLTSAIGCSCKSKVCYKN). Intrachain disulfides connect Cys-5-Cys-21, Cys-9-Cys-23, and Cys-14-Cys-28.

Post-translationally, this is a cyclic peptide.

Functionally, probably participates in a plant defense mechanism. Has cytotoxic activity, active against a human lymphoma cell line with an IC(50) of 0.96 uM. The protein is Cyclotide vibi-G of Viola biflora (Yellow wood violet).